Consider the following 914-residue polypeptide: Penicillin-binding protein 1A/1B (914 aa).

Residues 1 to 29 (MSDQFNSREARRKANSKSSPSPKKGKKRK) are disordered. The Cytoplasmic portion of the chain corresponds to 1–37 (MSDQFNSREARRKANSKSSPSPKKGKKRKKGGLFKKT). The helical; Signal-anchor for type II membrane protein transmembrane segment at 38–58 (LFTLLILFVLGVVGGAVTFAV) threads the bilayer. Residues 59 to 914 (MVSDAPSLDE…TNSSSIEKTN (856 aa)) are Extracellular-facing. The segment at 77–246 (STIYDKNGKE…TAYNPVKNPD (170 aa)) is transglycosylase. Glu-115 serves as the catalytic Proton donor; for transglycosylase activity. The interval 329–662 (TKAQDKLDEL…PDSVVEATVE (334 aa)) is transpeptidase. Ser-390 serves as the catalytic Acyl-ester intermediate; for transpeptidase activity. Residues 708–795 (KLSGLNVKYD…SYEVPKAEDD (88 aa)) enclose the Fibronectin type-III domain. The disordered stretch occupies residues 773-914 (TAVSDDGKST…TNSSSIEKTN (142 aa)). A compositionally biased stretch (basic and acidic residues) spans 798–828 (KKDQQQTDDEKQDDEKTQDDTQTDDSQKDDG). Acidic residues predominate over residues 829 to 840 (QTDQDQTDDSTN). 2 stretches are compositionally biased toward low complexity: residues 848–892 (NTNT…GSDT) and 900–914 (SNKTQTNSSSIEKTN).

The protein in the N-terminal section; belongs to the glycosyltransferase 51 family. In the C-terminal section; belongs to the transpeptidase family. Post-translationally, the product expressed from the translation of the ponA gene appears as two bands on a gel (1A and 1B), but the specific amino acid sequence of each protein is unknown. The N-terminus is blocked.

It is found in the cell membrane. It localises to the forespore inner membrane. The catalysed reaction is [GlcNAc-(1-&gt;4)-Mur2Ac(oyl-L-Ala-gamma-D-Glu-L-Lys-D-Ala-D-Ala)](n)-di-trans,octa-cis-undecaprenyl diphosphate + beta-D-GlcNAc-(1-&gt;4)-Mur2Ac(oyl-L-Ala-gamma-D-Glu-L-Lys-D-Ala-D-Ala)-di-trans,octa-cis-undecaprenyl diphosphate = [GlcNAc-(1-&gt;4)-Mur2Ac(oyl-L-Ala-gamma-D-Glu-L-Lys-D-Ala-D-Ala)](n+1)-di-trans,octa-cis-undecaprenyl diphosphate + di-trans,octa-cis-undecaprenyl diphosphate + H(+). The enzyme catalyses Preferential cleavage: (Ac)2-L-Lys-D-Ala-|-D-Ala. Also transpeptidation of peptidyl-alanyl moieties that are N-acyl substituents of D-alanine.. It functions in the pathway cell wall biogenesis; peptidoglycan biosynthesis. Its function is as follows. Cell wall formation. Synthesis of cross-linked peptidoglycan from the lipid intermediates. The enzyme has a penicillin-insensitive transglycosylase N-terminal domain (formation of linear glycan strands) and a penicillin-sensitive transpeptidase C-terminal domain (cross-linking of the peptide subunits). Required for vegetative growth. Has a partially redundant function with PBP-2A (pbpA) during spore outgrowth. This is Penicillin-binding protein 1A/1B (ponA) from Bacillus subtilis (strain 168).